Reading from the N-terminus, the 76-residue chain is Acyl carrier protein (76 aa).

The region spanning 1-76 (MSIEERVKKI…SAIDYVQNNQ (76 aa)) is the Carrier domain. Ser-36 carries the post-translational modification O-(pantetheine 4'-phosphoryl)serine.

The protein belongs to the acyl carrier protein (ACP) family. In terms of processing, 4'-phosphopantetheine is transferred from CoA to a specific serine of apo-ACP by AcpS. This modification is essential for activity because fatty acids are bound in thioester linkage to the sulfhydryl of the prosthetic group.

Its subcellular location is the cytoplasm. The protein operates within lipid metabolism; fatty acid biosynthesis. In terms of biological role, carrier of the growing fatty acid chain in fatty acid biosynthesis. This Haemophilus influenzae (strain 86-028NP) protein is Acyl carrier protein.